Consider the following 117-residue polypeptide: Large ribosomal subunit protein uL18 (117 aa).

This sequence belongs to the universal ribosomal protein uL18 family. Part of the 50S ribosomal subunit; part of the 5S rRNA/L5/L18/L25 subcomplex. Contacts the 5S and 23S rRNAs.

Its function is as follows. This is one of the proteins that bind and probably mediate the attachment of the 5S RNA into the large ribosomal subunit, where it forms part of the central protuberance. The polypeptide is Large ribosomal subunit protein uL18 (Alkalilimnicola ehrlichii (strain ATCC BAA-1101 / DSM 17681 / MLHE-1)).